Here is a 489-residue protein sequence, read N- to C-terminus: Squalene monooxygenase (489 aa).

The chain crosses the membrane as a helical span at residues 10–30 (VTYDALIVGAGVIGPCVATAL). Residues 21-22 (VI), 41-42 (ER), Arg49, Arg151, Val167, Asp328, and Met341 contribute to the FAD site. Transmembrane regions (helical) follow at residues 426 to 446 (FLAG…AVAF) and 464 to 484 (ALLE…PFLV).

It belongs to the squalene monooxygenase family. FAD is required as a cofactor.

It localises to the microsome membrane. It is found in the endoplasmic reticulum membrane. It catalyses the reaction squalene + reduced [NADPH--hemoprotein reductase] + O2 = (S)-2,3-epoxysqualene + oxidized [NADPH--hemoprotein reductase] + H2O + H(+). It functions in the pathway terpene metabolism; lanosterol biosynthesis; lanosterol from farnesyl diphosphate: step 2/3. In terms of biological role, catalyzes the stereospecific oxidation of squalene to (S)-2,3-epoxysqualene, and is considered to be a rate-limiting enzyme in steroid biosynthesis. This Candida glabrata (strain ATCC 2001 / BCRC 20586 / JCM 3761 / NBRC 0622 / NRRL Y-65 / CBS 138) (Yeast) protein is Squalene monooxygenase (ERG1).